Here is a 289-residue protein sequence, read N- to C-terminus: ATP synthase subunit a (289 aa).

A run of 6 helical transmembrane segments spans residues 43–63, 103–123, 160–180, 193–213, 232–252, and 259–279; these read AFHV…VLLF, VIAP…AVDL, FSVF…GGFI, IFVQ…TLIA, VFIL…GLGV, and AVFH…LTIV.

It belongs to the ATPase A chain family. F-type ATPases have 2 components, CF(1) - the catalytic core - and CF(0) - the membrane proton channel. CF(1) has five subunits: alpha(3), beta(3), gamma(1), delta(1), epsilon(1). CF(0) has three main subunits: a(1), b(2) and c(9-12). The alpha and beta chains form an alternating ring which encloses part of the gamma chain. CF(1) is attached to CF(0) by a central stalk formed by the gamma and epsilon chains, while a peripheral stalk is formed by the delta and b chains.

It localises to the cell inner membrane. In terms of biological role, key component of the proton channel; it plays a direct role in the translocation of protons across the membrane. This Pseudomonas fluorescens (strain Pf0-1) protein is ATP synthase subunit a.